The chain runs to 189 residues: Crossover junction endodeoxyribonuclease RuvC (189 aa).

Residues aspartate 7, glutamate 68, and aspartate 141 contribute to the active site. Mg(2+) is bound by residues aspartate 7, glutamate 68, and aspartate 141.

This sequence belongs to the RuvC family. Homodimer which binds Holliday junction (HJ) DNA. The HJ becomes 2-fold symmetrical on binding to RuvC with unstacked arms; it has a different conformation from HJ DNA in complex with RuvA. In the full resolvosome a probable DNA-RuvA(4)-RuvB(12)-RuvC(2) complex forms which resolves the HJ. Requires Mg(2+) as cofactor.

It localises to the cytoplasm. It catalyses the reaction Endonucleolytic cleavage at a junction such as a reciprocal single-stranded crossover between two homologous DNA duplexes (Holliday junction).. The RuvA-RuvB-RuvC complex processes Holliday junction (HJ) DNA during genetic recombination and DNA repair. Endonuclease that resolves HJ intermediates. Cleaves cruciform DNA by making single-stranded nicks across the HJ at symmetrical positions within the homologous arms, yielding a 5'-phosphate and a 3'-hydroxyl group; requires a central core of homology in the junction. The consensus cleavage sequence is 5'-(A/T)TT(C/G)-3'. Cleavage occurs on the 3'-side of the TT dinucleotide at the point of strand exchange. HJ branch migration catalyzed by RuvA-RuvB allows RuvC to scan DNA until it finds its consensus sequence, where it cleaves and resolves the cruciform DNA. The sequence is that of Crossover junction endodeoxyribonuclease RuvC from Nocardia farcinica (strain IFM 10152).